A 133-amino-acid chain; its full sequence is MANHDPISDMLTRIRNASEKRHESTKVPASRMSRSIAKVLQQEGFIAEISEQGEGVRTELVLGLKYSGKHRQPTIRSMQRVSKPGLRIYKNTRGLPKVLGGLGVAIISTSKGVMSDRDARKQGVGGEVLCYVY.

The disordered stretch occupies residues 1 to 32 (MANHDPISDMLTRIRNASEKRHESTKVPASRM). Residues 16–25 (NASEKRHEST) show a composition bias toward basic and acidic residues.

The protein belongs to the universal ribosomal protein uS8 family. In terms of assembly, part of the 30S ribosomal subunit. Contacts proteins S5 and S12.

In terms of biological role, one of the primary rRNA binding proteins, it binds directly to 16S rRNA central domain where it helps coordinate assembly of the platform of the 30S subunit. In Synechococcus sp. (strain CC9311), this protein is Small ribosomal subunit protein uS8.